A 211-amino-acid polypeptide reads, in one-letter code: Probable nicotinate-nucleotide adenylyltransferase (211 aa).

This sequence belongs to the NadD family.

The enzyme catalyses nicotinate beta-D-ribonucleotide + ATP + H(+) = deamido-NAD(+) + diphosphate. Its pathway is cofactor biosynthesis; NAD(+) biosynthesis; deamido-NAD(+) from nicotinate D-ribonucleotide: step 1/1. Catalyzes the reversible adenylation of nicotinate mononucleotide (NaMN) to nicotinic acid adenine dinucleotide (NaAD). This chain is Probable nicotinate-nucleotide adenylyltransferase, found in Lactiplantibacillus plantarum (strain ATCC BAA-793 / NCIMB 8826 / WCFS1) (Lactobacillus plantarum).